Reading from the N-terminus, the 464-residue chain is Chromosomal replication initiator protein DnaA (464 aa).

A domain I, interacts with DnaA modulators region spans residues 1–74 (MDAVGYEVFW…ERKFLELSGH (74 aa)). Residues 74 to 117 (HPIKLLFAVKKGTPHGNTAPPKHVHTYLEKNSPAEVPSKKSFHP) form a domain II region. Positions 118 to 341 (DLNRDYTFEN…GALTKIIAFI (224 aa)) are domain III, AAA+ region. ATP contacts are provided by Gly162, Gly164, Lys165, and Thr166. Residues 342 to 464 (EVSGSITIDI…LKSKVQDSIR (123 aa)) are domain IV, binds dsDNA.

This sequence belongs to the DnaA family. As to quaternary structure, oligomerizes as a right-handed, spiral filament on DNA at oriC.

Its subcellular location is the cytoplasm. Functionally, plays an essential role in the initiation and regulation of chromosomal replication. ATP-DnaA binds to the origin of replication (oriC) to initiate formation of the DNA replication initiation complex once per cell cycle. Binds the DnaA box (a 9 base pair repeat at the origin) and separates the double-stranded (ds)DNA. Forms a right-handed helical filament on oriC DNA; dsDNA binds to the exterior of the filament while single-stranded (ss)DNA is stabiized in the filament's interior. The ATP-DnaA-oriC complex binds and stabilizes one strand of the AT-rich DNA unwinding element (DUE), permitting loading of DNA polymerase. After initiation quickly degrades to an ADP-DnaA complex that is not apt for DNA replication. Binds acidic phospholipids. In Treponema pallidum (strain Nichols), this protein is Chromosomal replication initiator protein DnaA.